Consider the following 367-residue polypeptide: Glutamate 5-kinase 2 (367 aa).

Lysine 10 lines the ATP pocket. Substrate contacts are provided by serine 50, aspartate 136, and asparagine 148. Residues 168–169 (TD) and 210–216 (TGGMATK) each bind ATP. The PUA domain occupies 275-353 (SGQIVIDAGA…KQIGELLDYD (79 aa)).

The protein belongs to the glutamate 5-kinase family.

The protein resides in the cytoplasm. The enzyme catalyses L-glutamate + ATP = L-glutamyl 5-phosphate + ADP. The protein operates within amino-acid biosynthesis; L-proline biosynthesis; L-glutamate 5-semialdehyde from L-glutamate: step 1/2. Functionally, catalyzes the transfer of a phosphate group to glutamate to form L-glutamate 5-phosphate. This is Glutamate 5-kinase 2 from Pseudoalteromonas translucida (strain TAC 125).